A 104-amino-acid chain; its full sequence is Pterin-4-alpha-carbinolamine dehydratase (104 aa).

Ala-2 bears the N-acetylalanine mark. Residues 61 to 63 (DHH) and 78 to 81 (STHE) contribute to the substrate site.

It belongs to the pterin-4-alpha-carbinolamine dehydratase family. Homotetramer and homodimer. Heterotetramer with HNF1A; formed by a dimer of dimers. Interacts with HNF1B (via HNF-p1 domain); the interaction increases HNF1B transactivation activity.

It localises to the cytoplasm. It is found in the nucleus. The enzyme catalyses (4aS,6R)-4a-hydroxy-L-erythro-5,6,7,8-tetrahydrobiopterin = (6R)-L-erythro-6,7-dihydrobiopterin + H2O. In terms of biological role, involved in tetrahydrobiopterin biosynthesis. Seems to both prevent the formation of 7-pterins and accelerate the formation of quinonoid-BH2. Coactivator for HNF1A-dependent transcription. Regulates the dimerization of homeodomain protein HNF1A and enhances its transcriptional activity. Also acts as a coactivator for HNF1B-dependent transcription. The chain is Pterin-4-alpha-carbinolamine dehydratase (Pcbd1) from Rattus norvegicus (Rat).